The sequence spans 212 residues: Pyridoxine/pyridoxamine 5'-phosphate oxidase (212 aa).

Residues 7–10 (RRQY) and lysine 65 each bind substrate. Residues 60 to 65 (RIVLLK), 75 to 76 (FT), arginine 81, lysine 82, and glutamine 104 contribute to the FMN site. Residues tyrosine 122, arginine 126, and serine 130 each contribute to the substrate site. Residues 139–140 (QS) and tryptophan 184 contribute to the FMN site. Residue 190-192 (RLH) participates in substrate binding. Residue arginine 194 coordinates FMN.

Belongs to the pyridoxamine 5'-phosphate oxidase family. In terms of assembly, homodimer. The cofactor is FMN.

It catalyses the reaction pyridoxamine 5'-phosphate + O2 + H2O = pyridoxal 5'-phosphate + H2O2 + NH4(+). It carries out the reaction pyridoxine 5'-phosphate + O2 = pyridoxal 5'-phosphate + H2O2. It participates in cofactor metabolism; pyridoxal 5'-phosphate salvage; pyridoxal 5'-phosphate from pyridoxamine 5'-phosphate: step 1/1. The protein operates within cofactor metabolism; pyridoxal 5'-phosphate salvage; pyridoxal 5'-phosphate from pyridoxine 5'-phosphate: step 1/1. Functionally, catalyzes the oxidation of either pyridoxine 5'-phosphate (PNP) or pyridoxamine 5'-phosphate (PMP) into pyridoxal 5'-phosphate (PLP). In Alteromonas mediterranea (strain DSM 17117 / CIP 110805 / LMG 28347 / Deep ecotype), this protein is Pyridoxine/pyridoxamine 5'-phosphate oxidase.